We begin with the raw amino-acid sequence, 248 residues long: MAGHSKWKNIQHRKGRQDAKKSKAFTKVAKEIIIAAKGGGDPVANSRLRAAIAAAKAVNLPKDKIETAIKKGTGELAGGDIFELVYEGYGPGGIAFLIEVATDNKNRTVAEVRHILTKSGGSMGEAGCVGWMFDKKGVLTFPKEAYSEDQLMEIGLEAGCDDVIDEGDSWAVHVDPSSFEDVKAAFEQAGVTAESVELASVPQNTIEVDAETGKKLLRLVDALEENDDVQNVFANFDLPDEVLAEMED.

Residues 1–15 (MAGHSKWKNIQHRKG) are compositionally biased toward basic residues. Residues 1-22 (MAGHSKWKNIQHRKGRQDAKKS) form a disordered region.

The protein belongs to the TACO1 family.

It is found in the cytoplasm. The protein is Probable transcriptional regulatory protein Dde_2325 of Oleidesulfovibrio alaskensis (strain ATCC BAA-1058 / DSM 17464 / G20) (Desulfovibrio alaskensis).